The primary structure comprises 132 residues: Small ribosomal subunit protein uS8c (132 aa).

Belongs to the universal ribosomal protein uS8 family. In terms of assembly, part of the 30S ribosomal subunit.

It localises to the plastid. The protein resides in the chloroplast. Its function is as follows. One of the primary rRNA binding proteins, it binds directly to 16S rRNA central domain where it helps coordinate assembly of the platform of the 30S subunit. This Cycas taitungensis (Prince sago) protein is Small ribosomal subunit protein uS8c (rps8).